Here is a 360-residue protein sequence, read N- to C-terminus: Ribosomal RNA large subunit methyltransferase M (360 aa).

S-adenosyl-L-methionine contacts are provided by residues Ser-187, 220–223 (CPGG), Asp-239, Asp-259, and Asp-276. Lys-305 (proton acceptor) is an active-site residue.

It belongs to the class I-like SAM-binding methyltransferase superfamily. RNA methyltransferase RlmE family. RlmM subfamily. In terms of assembly, monomer.

The protein resides in the cytoplasm. The catalysed reaction is cytidine(2498) in 23S rRNA + S-adenosyl-L-methionine = 2'-O-methylcytidine(2498) in 23S rRNA + S-adenosyl-L-homocysteine + H(+). In terms of biological role, catalyzes the 2'-O-methylation at nucleotide C2498 in 23S rRNA. This Shewanella pealeana (strain ATCC 700345 / ANG-SQ1) protein is Ribosomal RNA large subunit methyltransferase M.